Here is a 325-residue protein sequence, read N- to C-terminus: ATP-dependent (S)-NAD(P)H-hydrate dehydratase (325 aa).

The YjeF C-terminal domain maps to 9-315 (LLKKVYNMVP…EHVHTAFLNV (307 aa)). (6S)-NADPHX-binding positions include Gly119 and 172 to 178 (NVVEFGR). ATP is bound by residues 211–215 (KGAKD) and 230–239 (GGLKRSGGQG). Asp240 contacts (6S)-NADPHX.

Belongs to the NnrD/CARKD family. Requires Mg(2+) as cofactor.

The protein resides in the cytoplasm. The enzyme catalyses (6S)-NADHX + ATP = ADP + phosphate + NADH + H(+). It carries out the reaction (6S)-NADPHX + ATP = ADP + phosphate + NADPH + H(+). Its function is as follows. Catalyzes the dehydration of the S-form of NAD(P)HX at the expense of ATP, which is converted to ADP. Together with NAD(P)HX epimerase, which catalyzes the epimerization of the S- and R-forms, the enzyme allows the repair of both epimers of NAD(P)HX, a damaged form of NAD(P)H that is a result of enzymatic or heat-dependent hydration. In Phaeosphaeria nodorum (strain SN15 / ATCC MYA-4574 / FGSC 10173) (Glume blotch fungus), this protein is ATP-dependent (S)-NAD(P)H-hydrate dehydratase.